The sequence spans 983 residues: 3',5'-cyclic-AMP phosphodiesterase, isoforms N/G (983 aa).

4 disordered regions span residues 31-333 (MPEG…SAGL), 349-370 (SDSD…ASES), 400-429 (VPAS…LSQG), and 528-566 (SAGQ…RLPT). Basic and acidic residues predominate over residues 35-50 (GEDHRGDLNQKGENNN). Positions 51–60 (RPRPSISLAN) are enriched in polar residues. Residues 84 to 97 (SVGGGDSDGGGEAI) are compositionally biased toward gly residues. Low complexity-rich tracts occupy residues 112-121 (LSTTTSNSSS) and 145-167 (QLQQ…SQRS). The span at 174–199 (AEGEEFDVDPMDEDDEDQTYDRETEE) shows a compositional bias: acidic residues. Low complexity-rich tracts occupy residues 219–234 (SSLF…TTSS) and 248–261 (AASI…SDLM). Composition is skewed to polar residues over residues 268–287 (STAT…SQRR), 358–368 (KSMSRNSSIAS), and 401–419 (PASN…SRSG). The PDEase domain maps to 569–898 (VETPRENELG…DYYQSMIPPS (330 aa)). Residue His-645 is the Proton donor of the active site. 645–649 (HNSLH) is a binding site for 3',5'-cyclic AMP. A divalent metal cation contacts are provided by His-649, His-685, Asp-686, and Asp-803. Residues Asp-686, Asp-803, and Gln-854 each contribute to the 3',5'-cyclic AMP site. Residues 920–937 (EESDQENLAELEEGDESG) are compositionally biased toward acidic residues. Residues 920–983 (EESDQENLAE…CQNQPQHGGM (64 aa)) are disordered. The segment covering 938–955 (GESTTTGTTGTTAASALS) has biased composition (low complexity). Positions 956–967 (GAGGGGGGGGGM) are enriched in gly residues. Over residues 973-983 (GCQNQPQHGGM) the composition is skewed to polar residues.

The protein belongs to the cyclic nucleotide phosphodiesterase family. PDE4 subfamily. In terms of assembly, monomer. A divalent metal cation is required as a cofactor.

The catalysed reaction is 3',5'-cyclic AMP + H2O = AMP + H(+). Its pathway is purine metabolism; 3',5'-cyclic AMP degradation; AMP from 3',5'-cyclic AMP: step 1/1. Functionally, hydrolyzes the second messenger cAMP, which is a key regulator of many important physiological processes. Vital for female fertility. Required for learning/memory. This Drosophila melanogaster (Fruit fly) protein is 3',5'-cyclic-AMP phosphodiesterase, isoforms N/G.